The chain runs to 447 residues: Trigger factor (447 aa).

One can recognise a PPIase FKBP-type domain in the interval 164–249 (GDLVVIDFIG…VKEVKQAVVP (86 aa)).

The protein belongs to the FKBP-type PPIase family. Tig subfamily.

The protein resides in the cytoplasm. It catalyses the reaction [protein]-peptidylproline (omega=180) = [protein]-peptidylproline (omega=0). Involved in protein export. Acts as a chaperone by maintaining the newly synthesized protein in an open conformation. Functions as a peptidyl-prolyl cis-trans isomerase. In Rhodospirillum rubrum (strain ATCC 11170 / ATH 1.1.1 / DSM 467 / LMG 4362 / NCIMB 8255 / S1), this protein is Trigger factor.